The sequence spans 159 residues: L-alanine exporter AlaE (159 aa).

Helical transmembrane passes span 17-37 (FAMVIFSFITGMMIEVFVSGM), 48-68 (LSIPVNIAIAWPYGVFRDYLL), 86-106 (MVAYVLFQSPVYACILLAVGA), and 110-130 (QIITAVTSNAFVSGALGIVYG).

The protein belongs to the AlaE exporter family.

Its subcellular location is the cell inner membrane. In terms of biological role, exports L-alanine. This chain is L-alanine exporter AlaE, found in Photobacterium profundum (strain SS9).